The following is a 197-amino-acid chain: MQKVVLATGNVGKVRELASLLSDFGLDIVAQTDLGVDSAEETGLTFIENAILKARHAAKVTALPAIADDSGLAVDVLGGAPGIYSARYSGEDATDQKNLQKLLETMKDVPDDQRQARFHCVLVYLRHAEDPTPLVCHGSWPGVITREPAGTGGFGYDPIFFVPSEGKTAAELTREEKSAISHRGQALKLLLDALRNG.

8 to 13 (TGNVGK) provides a ligand contact to substrate. Mg(2+) is bound by residues E40 and D69. The active-site Proton acceptor is the D69. Residues S70, 154 to 157 (FGYD), K177, and 182 to 183 (HR) contribute to the substrate site.

This sequence belongs to the HAM1 NTPase family. Homodimer. Mg(2+) serves as cofactor. It depends on Mn(2+) as a cofactor. The cofactor is Ni(2+).

The enzyme catalyses XTP + H2O = XMP + diphosphate + H(+). The catalysed reaction is dITP + H2O = dIMP + diphosphate + H(+). It carries out the reaction ITP + H2O = IMP + diphosphate + H(+). Its function is as follows. Pyrophosphatase that catalyzes the hydrolysis of nucleoside triphosphates to their monophosphate derivatives, with a high preference for the non-canonical purine nucleotides XTP (xanthosine triphosphate), dITP (deoxyinosine triphosphate) and ITP. Can also efficiently hydrolyze 2'-deoxy-N-6-hydroxylaminopurine triphosphate (dHAPTP). Seems to function as a house-cleaning enzyme that removes non-canonical purine nucleotides from the nucleotide pool, thus preventing their incorporation into DNA/RNA and avoiding chromosomal lesions. To a much lesser extent, is also able to hydrolyze GTP, dGTP and dUTP, but shows very low activity toward the canonical nucleotides dATP, dCTP and dTTP and toward 8-oxo-dGTP, purine deoxyribose triphosphate, 2-aminopurine deoxyribose triphosphate and 2,6-diaminopurine deoxyribose triphosphate. In terms of biological role, genetic interactions among priB, dam, lexA, nagC, polA, rdgB, rdgB, rep and uup link the PriA-PriB replication restart pathway to DNA double-strand break repair. The polypeptide is dITP/XTP pyrophosphatase (Escherichia coli (strain K12)).